The primary structure comprises 213 residues: Orotate phosphoribosyltransferase (213 aa).

Lys26 provides a ligand contact to 5-phospho-alpha-D-ribose 1-diphosphate. 34-35 contributes to the orotate binding site; that stretch reads FF. 5-phospho-alpha-D-ribose 1-diphosphate is bound by residues 72–73, Arg99, Lys100, Lys103, His105, and 124–132; these read YK and DDVITAGTA. 2 residues coordinate orotate: Thr128 and Arg156.

This sequence belongs to the purine/pyrimidine phosphoribosyltransferase family. PyrE subfamily. In terms of assembly, homodimer. The cofactor is Mg(2+).

It carries out the reaction orotidine 5'-phosphate + diphosphate = orotate + 5-phospho-alpha-D-ribose 1-diphosphate. Its pathway is pyrimidine metabolism; UMP biosynthesis via de novo pathway; UMP from orotate: step 1/2. Its function is as follows. Catalyzes the transfer of a ribosyl phosphate group from 5-phosphoribose 1-diphosphate to orotate, leading to the formation of orotidine monophosphate (OMP). This Haemophilus influenzae (strain 86-028NP) protein is Orotate phosphoribosyltransferase.